We begin with the raw amino-acid sequence, 396 residues long: Tryptophan synthase beta chain (396 aa).

The residue at position 86 (K86) is an N6-(pyridoxal phosphate)lysine.

Belongs to the TrpB family. In terms of assembly, tetramer of two alpha and two beta chains. The cofactor is pyridoxal 5'-phosphate.

The enzyme catalyses (1S,2R)-1-C-(indol-3-yl)glycerol 3-phosphate + L-serine = D-glyceraldehyde 3-phosphate + L-tryptophan + H2O. It functions in the pathway amino-acid biosynthesis; L-tryptophan biosynthesis; L-tryptophan from chorismate: step 5/5. In terms of biological role, the beta subunit is responsible for the synthesis of L-tryptophan from indole and L-serine. This Vibrio atlanticus (strain LGP32) (Vibrio splendidus (strain Mel32)) protein is Tryptophan synthase beta chain.